Here is a 517-residue protein sequence, read N- to C-terminus: Tyrosine-protein kinase Fgr (517 aa).

Gly2 carries N-myristoyl glycine lipidation. Residues Cys3 and Cys6 are each lipidated (S-palmitoyl cysteine). Positions 17–33 (VGLEGDFRSQGAEERYY) are enriched in basic and acidic residues. The segment at 17–46 (VGLEGDFRSQGAEERYYPDPTQGRSSSISP) is disordered. Tyr32 bears the Phosphotyrosine mark. Position 50 is a phosphoserine (Ser50). The SH3 domain occupies 65 to 126 (TGVTIFVALY…PSNYVAPVDS (62 aa)). The 98-residue stretch at 132 to 229 (WYFGKISRKD…GLCYLLTAPC (98 aa)) folds into the SH2 domain. Tyr196 carries the phosphotyrosine modification. Ser206 carries the phosphoserine modification. The 254-residue stretch at 251–504 (IALDRRLGTG…YLQSFLEDYF (254 aa)) folds into the Protein kinase domain. Residues 257–265 (LGTGCFGDV) and Lys279 contribute to the ATP site. Asp370 serves as the catalytic Proton acceptor. Tyr400 is modified (phosphotyrosine; by autocatalysis). Tyr511 carries the post-translational modification Phosphotyrosine; by SRC.

The protein belongs to the protein kinase superfamily. Tyr protein kinase family. SRC subfamily. In terms of assembly, interacts with ITGB1, ITGB2, MS4A2/FCER1B and FCGR2. Interacts (via SH2 domain) with SYK (tyrosine phosphorylated). Interacts (via SH2 domain) with FLT3 (tyrosine phosphorylated). Interacts with PTK2/FAK1. Interacts (via SH2 domain) with HCLS1 (tyrosine phosphorylated by SYK). Interacts with SIRPA and PTPNS1. Interacts (not phosphorylated on tyrosine residues) with CBL; FGR tyrosine phosphorylation promotes dissociation. Interacts with CLNK. Ubiquitinated. Becomes ubiquitinated in response to ITGB2 signaling; this does not lead to degradation. Post-translationally, phosphorylated. Autophosphorylated on tyrosine residues. Becomes phosphorylated in response to FCGR2 engagement, cell adhesion and signaling by ITGB2. Prior phosphorylation at Tyr-511 by SRC inhibits ulterior autophosphorylation at Tyr-400. In terms of tissue distribution, detected in brain cortex (at protein level).

The protein resides in the cell membrane. Its subcellular location is the cell projection. It is found in the ruffle membrane. It localises to the cytoplasm. The protein localises to the cytosol. The protein resides in the cytoskeleton. Its subcellular location is the mitochondrion inner membrane. It is found in the mitochondrion intermembrane space. The catalysed reaction is L-tyrosyl-[protein] + ATP = O-phospho-L-tyrosyl-[protein] + ADP + H(+). With respect to regulation, activated by autophosphorylation. Prior phosphorylation at Tyr-511 by SRC inhibits ulterior autophosphorylation at Tyr-400. Activated by phorbol myristate acetate, phosphatidic acid and poly-Lys. Binding (via SH2 domain) of HCLS1 that is already phosphorylated by SYK strongly increases kinase activity. Its function is as follows. Non-receptor tyrosine-protein kinase that transmits signals from cell surface receptors devoid of kinase activity and contributes to the regulation of immune responses, including neutrophil, monocyte, macrophage and mast cell functions, cytoskeleton remodeling in response to extracellular stimuli, phagocytosis, cell adhesion and migration. Promotes mast cell degranulation, release of inflammatory cytokines and IgE-mediated anaphylaxis. Acts downstream of receptors that bind the Fc region of immunoglobulins, such as MS4A2/FCER1B, FCER1G and FCGR2. Acts downstream of ITGB1 and ITGB2, and regulates actin cytoskeleton reorganization, cell spreading and adhesion. Depending on the context, activates or inhibits cellular responses. Functions as a negative regulator of ITGB2 signaling, phagocytosis and SYK activity in monocytes. Required for normal ITGB1 and ITGB2 signaling, normal cell spreading and adhesion in neutrophils and macrophages. Functions as a positive regulator of cell migration and regulates cytoskeleton reorganization via RAC1 activation. Phosphorylates SYK (in vitro) and promotes SYK-dependent activation of AKT1 and MAP kinase signaling. Phosphorylates PLD2 in antigen-stimulated mast cells, leading to PLD2 activation and the production of the signaling molecules lysophosphatidic acid and diacylglycerol. Promotes activation of PIK3R1. Phosphorylates FASLG, and thereby regulates its ubiquitination and subsequent internalization. Phosphorylates ABL1. Promotes phosphorylation of CBL, CTTN, PIK3R1, PTK2/FAK1, PTK2B/PYK2 and VAV2. Phosphorylates HCLS1 that has already been phosphorylated by SYK, but not unphosphorylated HCLS1. Together with CLNK, it acts as a negative regulator of natural killer cell-activating receptors and inhibits interferon-gamma production. This chain is Tyrosine-protein kinase Fgr (Fgr), found in Rattus norvegicus (Rat).